Reading from the N-terminus, the 696-residue chain is Serotransferrin (696 aa).

2 consecutive Transferrin-like domains span residues 6-332 (VRWC…NLRE) and 346-672 (VRWC…NLRK). 2 disulfide bridges follow: cysteine 9–cysteine 47 and cysteine 19–cysteine 38. Residue arginine 23 is modified to Dimethylated arginine. The N-linked (GlcNAc...) asparagine glycan is linked to asparagine 25. 2 residues coordinate Fe(3+): aspartate 62 and tyrosine 94. Intrachain disulfides connect cysteine 117–cysteine 198, cysteine 157–cysteine 173, cysteine 160–cysteine 181, cysteine 170–cysteine 183, and cysteine 231–cysteine 245. The hydrogencarbonate site is built by threonine 119, arginine 123, alanine 125, and glycine 126. Tyrosine 192 contacts Fe(3+). Histidine 253 contributes to the Fe(3+) binding site. Cystine bridges form between cysteine 343–cysteine 605, cysteine 349–cysteine 381, cysteine 359–cysteine 372, cysteine 406–cysteine 682, cysteine 423–cysteine 646, cysteine 456–cysteine 532, cysteine 480–cysteine 673, cysteine 490–cysteine 504, cysteine 501–cysteine 515, cysteine 572–cysteine 586, and cysteine 624–cysteine 629. Position 374 is a phosphoserine (serine 374). Positions 396 and 431 each coordinate Fe(3+). Residues threonine 458, arginine 462, alanine 464, and glycine 465 each contribute to the hydrogencarbonate site. N-linked (GlcNAc...) asparagine glycosylation occurs at asparagine 497. Tyrosine 526 is a binding site for Fe(3+). Histidine 594 serves as a coordination point for Fe(3+). Serine 674 is modified (phosphoserine).

Belongs to the transferrin family. Monomer. Part of a complex composed of SLC40A1/ferroportin, TF/transferrin and HEPH/hephaestin that transfers iron from cells to transferrin. As to expression, expressed by the liver and secreted in plasma.

Its subcellular location is the secreted. In terms of biological role, transferrins are iron binding transport proteins which can bind two Fe(3+) ions in association with the binding of an anion, usually bicarbonate. It is responsible for the transport of iron from sites of absorption and heme degradation to those of storage and utilization. Serum transferrin may also have a further role in stimulating cell proliferation. This is Serotransferrin (TF) from Sus scrofa (Pig).